The chain runs to 148 residues: uncharacterized protein (148 aa).

A compositionally biased stretch (polar residues) spans 1–11 (MKPRNINNSLP). The interval 1–31 (MKPRNINNSLPLQPLVPDQENKNKKNEEKSV) is disordered. A compositionally biased stretch (basic and acidic residues) spans 19–30 (QENKNKKNEEKS).

This is an uncharacterized protein from Escherichia coli (strain K12).